A 243-amino-acid polypeptide reads, in one-letter code: Pleckstrin homology domain-containing family B member 1 (243 aa).

In terms of domain architecture, PH spans 21-128 (ALVRGGWLWR…WKTALMEANS (108 aa)).

In terms of assembly, binds transducins. Homodimer. Interacts (via PH domain) with MYO1C. Interacts (via PH domain) with MYO7A. As to expression, highly expressed in retina and brain. In retina, abundantly expressed in photoreceptors. Isoform 4 is the predominant isoform expressed in mature olfactory receptor neurons and vestibular and cochlear hair cells. Also expressed in cells with possible sensory function, including peripheral retinal ganglion cells, cochlear interdental cells, and neurons of the circumventricular organ (at protein level).

It localises to the membrane. Its subcellular location is the cytoplasm. The chain is Pleckstrin homology domain-containing family B member 1 (Plekhb1) from Mus musculus (Mouse).